Consider the following 378-residue polypeptide: MNEMTHRTKTRPVKVGNLTIGGNNELIIQSMTTTKTHDVEATVAEIKRLEEAGCQVVRVAVPDERAANAIADIKKQINIPLVADIHFDYRLALKAIEGGIDKVRINPGNIGRRHKVEAVVNAAKERGIPIRIGVNAGSLERHILEKYGYPTADGMVESALHHIKILEDLDFHDIIVSMKASDVNLAIEAYEKAARAFDYPLHLGITESGTLFAGTVKSAAGLGAILNKGIGNTLRISLSADPVEEVKVARELLKSFGLASNAATLISCPTCGRIEIDLISIANEVEEYISTLQVPIKVAVLGCAVNGPGEAREADIGIAGARGEGLLFRKGQVVRKVPEEIMVEELKKEIDVIAAEMAAEREKEKEKEKEKEKETQEQ.

[4Fe-4S] cluster-binding residues include C268, C271, C303, and E310. The disordered stretch occupies residues 359-378; sequence AEREKEKEKEKEKEKETQEQ.

It belongs to the IspG family. [4Fe-4S] cluster is required as a cofactor.

It carries out the reaction (2E)-4-hydroxy-3-methylbut-2-enyl diphosphate + oxidized [flavodoxin] + H2O + 2 H(+) = 2-C-methyl-D-erythritol 2,4-cyclic diphosphate + reduced [flavodoxin]. It participates in isoprenoid biosynthesis; isopentenyl diphosphate biosynthesis via DXP pathway; isopentenyl diphosphate from 1-deoxy-D-xylulose 5-phosphate: step 5/6. In terms of biological role, converts 2C-methyl-D-erythritol 2,4-cyclodiphosphate (ME-2,4cPP) into 1-hydroxy-2-methyl-2-(E)-butenyl 4-diphosphate. The chain is 4-hydroxy-3-methylbut-2-en-1-yl diphosphate synthase (flavodoxin) from Bacillus cereus (strain ZK / E33L).